The following is a 309-amino-acid chain: Caspase-7 (309 aa).

A propeptide spans 1–24 (MSGDQHADRSSGEKSNGDQDDTVD) (N-terminally processed). Over residues 1-31 (MSGDQHADRSSGEKSNGDQDDTVDAKPDRSS) the composition is skewed to basic and acidic residues. Residues 1-53 (MSGDQHADRSSGEKSNGDQDDTVDAKPDRSSRLSLFAKKKKNGEEEQPKSSLS) are disordered. The interval 39–42 (KKKN) is exosite. Residues 81–92 (KNFEDKTGMGTR) are loop L1. Residues histidine 149 and cysteine 191 contribute to the active site. Residues 192-201 (RGSEFDEGIQ) form a loop L2 region. The propeptide occupies 204 to 214 (SGPANDTLETD). The tract at residues 234-246 (VPGYYSWRNPGRG) is loop L3. The segment at 282–296 (ESQSDDPRFSEKKQI) is loop L4.

It belongs to the peptidase C14A family. Heterotetramer that consists of two anti-parallel arranged heterodimers, each one formed by a 20 kDa (p20) and a 11 kDa (p11) subunit. Cleavage by different proteases, such as granzyme B (GZMB), caspase-1 (CASP1), caspase-8 (CASP8) or caspase-9 (CASP9) generate the two active subunits. Its involvement in different programmed cell death processes is probably specified by the protease that activates CASP7. Cleaved and activated by initiator caspases (CASP8 and/or CASP9), leading to execution phase of apoptosis. Cleavage and maturation by GZMB regulates granzyme-mediated programmed cell death. Cleaved and activated by CASP1 in response to bacterial infection.

It localises to the cytoplasm. The protein resides in the cytosol. Its subcellular location is the nucleus. The protein localises to the secreted. It is found in the extracellular space. The catalysed reaction is Strict requirement for an Asp residue at position P1 and has a preferred cleavage sequence of Asp-Glu-Val-Asp-|-.. During activation, the N-terminal disordered prodomain is removed by cleavage. Concomitantly, double cleavage gives rise to a large Caspase-7 subunit p20 and a small Caspase-7 subunit p11. The two large and two small subunits then assemble to form the active CASP7 complex. Can be cleaved and activated by different caspases, depending on the context. Cleaved and activated by initiator caspases (CASP8 and/or CASP9), leading to execution phase of apoptosis. Cleavage and maturation by GZMB regulates granzyme-mediated programmed cell death. Cleavage and maturation by CASP1 regulates pyroptosis. Inhibited by BIRC6; following inhibition of BIRC6-caspase binding by DIABLO/SMAC, BIRC6 is subjected to caspase cleavage, leading to an increase in active caspases. Thiol protease involved in different programmed cell death processes, such as apoptosis, pyroptosis or granzyme-mediated programmed cell death, by proteolytically cleaving target proteins. Has a marked preference for Asp-Glu-Val-Asp (DEVD) consensus sequences, with some plasticity for alternate non-canonical sequences. Its involvement in the different programmed cell death processes is probably determined by upstream proteases that activate CASP7. Acts as an effector caspase involved in the execution phase of apoptosis: following cleavage and activation by initiator caspases (CASP8 and/or CASP9), mediates execution of apoptosis by catalyzing cleavage of proteins. Compared to CASP3, acts as a minor executioner caspase and cleaves a limited set of target proteins. Acts as a key regulator of the inflammatory response in response to bacterial infection by catalyzing cleavage and activation of the sphingomyelin phosphodiesterase SMPD1 in the extracellular milieu, thereby promoting membrane repair. Cleaves BIRC6 following inhibition of BIRC6-caspase binding by DIABLO/SMAC. This is Caspase-7 from Gallus gallus (Chicken).